The primary structure comprises 284 residues: Bifunctional protein FolD 1 (284 aa).

NADP(+) is bound by residues 166-168 and I232; that span reads GAS.

It belongs to the tetrahydrofolate dehydrogenase/cyclohydrolase family. In terms of assembly, homodimer.

The catalysed reaction is (6R)-5,10-methylene-5,6,7,8-tetrahydrofolate + NADP(+) = (6R)-5,10-methenyltetrahydrofolate + NADPH. It carries out the reaction (6R)-5,10-methenyltetrahydrofolate + H2O = (6R)-10-formyltetrahydrofolate + H(+). Its pathway is one-carbon metabolism; tetrahydrofolate interconversion. Its function is as follows. Catalyzes the oxidation of 5,10-methylenetetrahydrofolate to 5,10-methenyltetrahydrofolate and then the hydrolysis of 5,10-methenyltetrahydrofolate to 10-formyltetrahydrofolate. The polypeptide is Bifunctional protein FolD 1 (Pseudomonas syringae pv. tomato (strain ATCC BAA-871 / DC3000)).